The primary structure comprises 150 residues: uncharacterized protein (150 aa).

Positions 1-39 (MKQRFSQVATVIFFVMSIRSPRNLGFFFTLALFVVLVCS) are cleaved as a signal peptide.

This is an uncharacterized protein from Saccharomyces cerevisiae (strain ATCC 204508 / S288c) (Baker's yeast).